The primary structure comprises 578 residues: PTS system fructose-specific EIIB'BC component (578 aa).

2 PTS EIIB type-2 domains span residues 1-99 (MSKI…EALA) and 119-214 (VVAI…AALA). Cysteine 125 (phosphocysteine intermediate; for EIIB activity) is an active-site residue. Cysteine 125 carries the phosphocysteine; by EIIA modification. In terms of domain architecture, PTS EIIC type-2 spans 241–576 (PYMHLLTGVS…KKPIPAEERA (336 aa)). 9 consecutive transmembrane segments (helical) span residues 251–271 (YMLPLVVAGGLLIALSFVFGI), 284–304 (LMAIGGGAAFKLMVPVLAGFI), 319–339 (IGGMLAVNLNAGFLGGIVAGF), 364–384 (VLILPLLSTAITGLIMVYVVG), 405–425 (NAVVLGLILGGMMAVDMGGPI), 428–450 (AAYTFAVGLLTSSTYAPMAAVMA), 477–497 (AGGAAAVLGLSFITEGAIPFA), 518–538 (LSMALGCLLVAPHGGIFVLAI), and 545–565 (LGLYALSIVVGTLVTTGLLIA).

Its subcellular location is the cell inner membrane. It carries out the reaction D-fructose(out) + N(pros)-phospho-L-histidyl-[protein] = D-fructose 1-phosphate(in) + L-histidyl-[protein]. The phosphoenolpyruvate-dependent sugar phosphotransferase system (sugar PTS), a major carbohydrate active transport system, catalyzes the phosphorylation of incoming sugar substrates concomitantly with their translocation across the cell membrane. The enzyme II FruAB PTS system is involved in fructose transport. The sequence is that of PTS system fructose-specific EIIB'BC component from Rhodobacter capsulatus (Rhodopseudomonas capsulata).